Here is an 87-residue protein sequence, read N- to C-terminus: U3-theraphotoxin-Hhn1a 18 (87 aa).

The N-terminal stretch at Met1–Ala24 is a signal peptide. The propeptide occupies Ser25–Arg52. Cystine bridges form between Cys54–Cys67, Cys61–Cys72, and Cys66–Cys79.

The protein belongs to the neurotoxin 10 (Hwtx-1) family. 51 (Hntx-8) subfamily. Hntx-8 sub-subfamily. As to expression, expressed by the venom gland.

It localises to the secreted. Functionally, ion channel inhibitor. This Cyriopagopus hainanus (Chinese bird spider) protein is U3-theraphotoxin-Hhn1a 18.